The following is a 73-amino-acid chain: LQMLHAWTNSALVHYAAPDWRETGGRLLGEGALRELRDGRRAASSSWPGRGSSRRWRPGRRTGAAARGCWRAP.

The tract at residues 39 to 73 (GRRAASSSWPGRGSSRRWRPGRRTGAAARGCWRAP) is disordered. Low complexity-rich tracts occupy residues 42–51 (AASSSWPGRG) and 61–73 (RTGA…WRAP).

This sequence belongs to the peptidase M1 family. Zn(2+) is required as a cofactor.

It is found in the cytoplasm. Hydrolyzes preferentially the N-terminal glycine and can also hydrolyze other amino acids which are used by PepN but is unable to hydrolyze basic amino acids. This chain is Aminopeptidase G (pepG), found in Streptomyces lividans.